Reading from the N-terminus, the 472-residue chain is Adenosylhomocysteinase (472 aa).

Substrate is bound by residues threonine 64, aspartate 138, and glutamate 198. An NAD(+)-binding site is contributed by 199–201 (TTT). Residues lysine 228 and aspartate 232 each contribute to the substrate site. Residues asparagine 233, 262–267 (GFGDVG), glutamate 285, asparagine 320, 341–343 (IGH), and asparagine 386 each bind NAD(+).

The protein belongs to the adenosylhomocysteinase family. The cofactor is NAD(+).

It is found in the cytoplasm. It catalyses the reaction S-adenosyl-L-homocysteine + H2O = L-homocysteine + adenosine. It participates in amino-acid biosynthesis; L-homocysteine biosynthesis; L-homocysteine from S-adenosyl-L-homocysteine: step 1/1. Functionally, may play a key role in the regulation of the intracellular concentration of adenosylhomocysteine. This Prochlorococcus marinus (strain MIT 9312) protein is Adenosylhomocysteinase.